A 558-amino-acid chain; its full sequence is Chaperonin GroEL 1 (558 aa).

ATP-binding positions include 29–32 (TLGP), 86–90 (DGTTT), glycine 413, and aspartate 494.

This sequence belongs to the chaperonin (HSP60) family. In terms of assembly, forms a cylinder of 14 subunits composed of two heptameric rings stacked back-to-back. Interacts with the co-chaperonin GroES.

The protein resides in the cytoplasm. The enzyme catalyses ATP + H2O + a folded polypeptide = ADP + phosphate + an unfolded polypeptide.. Together with its co-chaperonin GroES, plays an essential role in assisting protein folding. The GroEL-GroES system forms a nano-cage that allows encapsulation of the non-native substrate proteins and provides a physical environment optimized to promote and accelerate protein folding. This is Chaperonin GroEL 1 from Acaryochloris marina (strain MBIC 11017).